The chain runs to 351 residues: GDSL esterase/lipase At4g26790 (351 aa).

The signal sequence occupies residues 1–25 (MQRNRVLAFLLLAAQLLVKIPETCA). The active-site Nucleophile is Ser36. N-linked (GlcNAc...) asparagine glycosylation occurs at Asn118. Residues Asp326 and His329 contribute to the active site.

The protein belongs to the 'GDSL' lipolytic enzyme family.

The protein resides in the secreted. This is GDSL esterase/lipase At4g26790 from Arabidopsis thaliana (Mouse-ear cress).